The sequence spans 80 residues: Small ribosomal subunit protein uS17 (80 aa).

This sequence belongs to the universal ribosomal protein uS17 family. Part of the 30S ribosomal subunit.

One of the primary rRNA binding proteins, it binds specifically to the 5'-end of 16S ribosomal RNA. The polypeptide is Small ribosomal subunit protein uS17 (Chelativorans sp. (strain BNC1)).